The chain runs to 565 residues: MATEMQAAPVLSTPDSLILEATEPVARQNATRTLSDEELSITYDIERTLQEIRQARYKRIALQFPDDMLPDAPRVFQLLSRGLACRDVDKITVEKNGNGTGGVESEKLAQDVSQLSVDDKPEPEPKLYILADTSYGTCCVDEVAAEHVNADVVVHYGRSCLSPTARLPVIYVFTHKELPIEPVIQAFKATYPDQATKIILAADVTYCDHIPAVYARLMEEGYTNLYATELIHCPSSAIPNRTVPDSVRENPDTLSEWQLFHISDPPTALLLTLASRVAAIHIYPTTDAPSDNVKPLPVSTSAALGRRYAILTRLSTVPIFGILINTLSVKNYLHIVEHVKQKIADAGKKSYMFVVGKLNAAKVANFSEIGGWVVIGCWESSLVDSKDFWKPVITPFELELALKGDHERVWTGAWQSDFQSILDQPAEEAQTADHEESPNDDDDMSEPESAPPEFDLRTGRYVSHTRPMRNPAPRVSAQSDDAVSAASGPAAARALARRAKGELAMIGGTVSPGAEYLRSQRTWKGLGSDFDIQYDDEDPSDSTLVVEGRKGIARGYTVGDSIEKH.

Residues cysteine 139, cysteine 160, and cysteine 377 each contribute to the [4Fe-4S] cluster site. Disordered regions lie at residues 424–458 (QPAEEAQTADHEESPNDDDDMSEPESAPPEFDLRT) and 464–483 (HTRPMRNPAPRVSAQSDDAV).

It belongs to the DPH1/DPH2 family. DPH2 subfamily. Component of the 2-(3-amino-3-carboxypropyl)histidine synthase complex composed of dph1, dph2, dph3 and a NADH-dependent reductase, predominantly cbr1. [4Fe-4S] cluster serves as cofactor.

It localises to the cytoplasm. It participates in protein modification; peptidyl-diphthamide biosynthesis. Functionally, required for the first step of diphthamide biosynthesis, a post-translational modification of histidine which occurs in elongation factor 2. Dph1 and dph2 transfer a 3-amino-3-carboxypropyl (ACP) group from S-adenosyl-L-methionine (SAM) to a histidine residue, the reaction is assisted by a reduction system comprising dph3 and a NADH-dependent reductase, predominantly cbr1. Facilitates the reduction of the catalytic iron-sulfur cluster found in the dph1 subunit. The polypeptide is 2-(3-amino-3-carboxypropyl)histidine synthase subunit 2 (dph2) (Aspergillus fumigatus (strain ATCC MYA-4609 / CBS 101355 / FGSC A1100 / Af293) (Neosartorya fumigata)).